Reading from the N-terminus, the 207-residue chain is Outer-membrane lipoprotein carrier protein (207 aa).

Residues 1–21 form the signal peptide; the sequence is MRLFRVLLLSAVAFALSPAQA.

It belongs to the LolA family. In terms of assembly, monomer.

Its subcellular location is the periplasm. Participates in the translocation of lipoproteins from the inner membrane to the outer membrane. Only forms a complex with a lipoprotein if the residue after the N-terminal Cys is not an aspartate (The Asp acts as a targeting signal to indicate that the lipoprotein should stay in the inner membrane). The polypeptide is Outer-membrane lipoprotein carrier protein (Azotobacter vinelandii (strain DJ / ATCC BAA-1303)).